The primary structure comprises 239 residues: MNFPRPLVPATLVQRYKRFLFDAILADGTAITGSCPNTGSMRGLTIPGSPIWLSEHDSPTRKYRHMLEIVEADGTLVGINTGLPNRIAEEAIMAGQVGNLHTYGTLRREQRYGRNSRIDILLSDAEKGLAYVEVKNVHFSRVRGLAEFPDSPTQRGAKHLEELGDMVEAGHRAIMLYLIQRGDCSRFRICRELDPVYARAFERASARGVEAYAVKCAVSPGQIVAAGPIVVDEPVPAVL.

Belongs to the SfsA family.

The sequence is that of Sugar fermentation stimulation protein homolog from Rhizobium meliloti (strain 1021) (Ensifer meliloti).